The following is a 163-amino-acid chain: Superoxide dismutase [Mn] (163 aa).

4 residues coordinate Mn(2+): His2, His50, Asp134, and His138.

This sequence belongs to the iron/manganese superoxide dismutase family. Mn(2+) serves as cofactor.

It carries out the reaction 2 superoxide + 2 H(+) = H2O2 + O2. Functionally, destroys superoxide anion radicals which are normally produced within the cells and which are toxic to biological systems. This Mycobacterium scrofulaceum protein is Superoxide dismutase [Mn] (sodA).